The chain runs to 142 residues: Hemoglobin subunit alpha (142 aa).

In terms of domain architecture, Globin spans 2–142 (VLSAADKTNV…VSTVLTSKYR (141 aa)). Ser4 carries the phosphoserine modification. Lys8 is modified (N6-succinyllysine). A Phosphothreonine modification is found at Thr9. An N6-succinyllysine modification is found at Lys12. Lys17 is modified (N6-acetyllysine; alternate). The residue at position 17 (Lys17) is an N6-succinyllysine; alternate. A Phosphotyrosine modification is found at Tyr25. Position 41 is an N6-succinyllysine (Lys41). Ser50 is subject to Phosphoserine. His59 is an O2 binding site. His88 contributes to the heme b binding site. Ser103 is modified (phosphoserine). The residue at position 109 (Thr109) is a Phosphothreonine. Ser125 and Ser132 each carry phosphoserine. Thr135 and Thr138 each carry phosphothreonine. Ser139 bears the Phosphoserine mark.

It belongs to the globin family. Heterotetramer of two alpha chains and two beta chains. Red blood cells.

In terms of biological role, involved in oxygen transport from the lung to the various peripheral tissues. Functionally, hemopressin acts as an antagonist peptide of the cannabinoid receptor CNR1. Hemopressin-binding efficiently blocks cannabinoid receptor CNR1 and subsequent signaling. This chain is Hemoglobin subunit alpha (HBA), found in Equus caballus (Horse).